A 57-amino-acid chain; its full sequence is NLYQFKNMIQCANRGSRHWLAYADYGCYCGWGGSGTPVDELDRCCKTHDDCYTEAGK.

Y28, G30, and G32 together coordinate Ca(2+). Residues C29 and C45 are joined by a disulfide bond. The active site involves H48. Residue D49 coordinates Ca(2+).

Ca(2+) is required as a cofactor. In terms of tissue distribution, expressed by the venom gland.

It is found in the secreted. The enzyme catalyses a 1,2-diacyl-sn-glycero-3-phosphocholine + H2O = a 1-acyl-sn-glycero-3-phosphocholine + a fatty acid + H(+). Its function is as follows. Snake venom phospholipase A2 (PLA2) that inhibits collagen-induced platelet aggregation. In terms of inhibition of platelet aggregation, superbin b is more potent as superbin c, and d. PLA2 catalyzes the calcium-dependent hydrolysis of the 2-acyl groups in 3-sn-phosphoglycerides. The chain is Phospholipase A2 superbin b from Austrelaps superbus (Lowland copperhead snake).